Reading from the N-terminus, the 633-residue chain is Chaperone protein HtpG (633 aa).

Residues 1–341 (MSATSSKETL…SADLPLNVSR (341 aa)) form an a; substrate-binding region. Residues 342-558 (EILQSSRDID…EGDMSANLER (217 aa)) form a b region. A c region spans residues 559–633 (LLKAAGQAAP…LNGLLAMLPG (75 aa)).

Belongs to the heat shock protein 90 family. As to quaternary structure, homodimer.

Its subcellular location is the cytoplasm. Molecular chaperone. Has ATPase activity. The polypeptide is Chaperone protein HtpG (Thiobacillus denitrificans (strain ATCC 25259 / T1)).